An 89-amino-acid polypeptide reads, in one-letter code: Small ribosomal subunit protein uS15 (89 aa).

Belongs to the universal ribosomal protein uS15 family. As to quaternary structure, part of the 30S ribosomal subunit. Forms a bridge to the 50S subunit in the 70S ribosome, contacting the 23S rRNA.

Functionally, one of the primary rRNA binding proteins, it binds directly to 16S rRNA where it helps nucleate assembly of the platform of the 30S subunit by binding and bridging several RNA helices of the 16S rRNA. In terms of biological role, forms an intersubunit bridge (bridge B4) with the 23S rRNA of the 50S subunit in the ribosome. This is Small ribosomal subunit protein uS15 from Chlamydia felis (strain Fe/C-56) (Chlamydophila felis).